A 474-amino-acid chain; its full sequence is Glutamyl-tRNA(Gln) amidotransferase subunit A (474 aa).

Residues lysine 76 and serine 151 each act as charge relay system in the active site. Serine 175 acts as the Acyl-ester intermediate in catalysis.

It belongs to the amidase family. GatA subfamily. Heterotrimer of A, B and C subunits.

The enzyme catalyses L-glutamyl-tRNA(Gln) + L-glutamine + ATP + H2O = L-glutaminyl-tRNA(Gln) + L-glutamate + ADP + phosphate + H(+). Its function is as follows. Allows the formation of correctly charged Gln-tRNA(Gln) through the transamidation of misacylated Glu-tRNA(Gln) in organisms which lack glutaminyl-tRNA synthetase. The reaction takes place in the presence of glutamine and ATP through an activated gamma-phospho-Glu-tRNA(Gln). The polypeptide is Glutamyl-tRNA(Gln) amidotransferase subunit A (Chlorobium limicola (strain DSM 245 / NBRC 103803 / 6330)).